The chain runs to 304 residues: Acetylglutamate kinase (304 aa).

Substrate contacts are provided by residues 82–83 (GG), arginine 104, and asparagine 197.

Belongs to the acetylglutamate kinase family. ArgB subfamily.

The protein resides in the cytoplasm. The catalysed reaction is N-acetyl-L-glutamate + ATP = N-acetyl-L-glutamyl 5-phosphate + ADP. The protein operates within amino-acid biosynthesis; L-arginine biosynthesis; N(2)-acetyl-L-ornithine from L-glutamate: step 2/4. Its function is as follows. Catalyzes the ATP-dependent phosphorylation of N-acetyl-L-glutamate. The sequence is that of Acetylglutamate kinase from Prochlorococcus marinus (strain SARG / CCMP1375 / SS120).